The chain runs to 302 residues: ATP synthase gamma chain (302 aa).

It belongs to the ATPase gamma chain family. F-type ATPases have 2 components, CF(1) - the catalytic core - and CF(0) - the membrane proton channel. CF(1) has five subunits: alpha(3), beta(3), gamma(1), delta(1), epsilon(1). CF(0) has three main subunits: a, b and c.

It is found in the cell membrane. Its function is as follows. Produces ATP from ADP in the presence of a proton gradient across the membrane. The gamma chain is believed to be important in regulating ATPase activity and the flow of protons through the CF(0) complex. This Enterococcus faecalis (strain ATCC 700802 / V583) protein is ATP synthase gamma chain.